A 110-amino-acid chain; its full sequence is Holo-[acyl-carrier-protein] synthase (110 aa).

Mg(2+) is bound by residues aspartate 8 and glutamate 54.

Belongs to the P-Pant transferase superfamily. AcpS family. It depends on Mg(2+) as a cofactor.

It is found in the cytoplasm. It carries out the reaction apo-[ACP] + CoA = holo-[ACP] + adenosine 3',5'-bisphosphate + H(+). In terms of biological role, transfers the 4'-phosphopantetheine moiety from coenzyme A to a Ser of acyl-carrier-protein. This chain is Holo-[acyl-carrier-protein] synthase, found in Mycoplasma capricolum subsp. capricolum (strain California kid / ATCC 27343 / NCTC 10154).